A 93-amino-acid polypeptide reads, in one-letter code: Protein IDA-LIKE 4 (93 aa).

Residues 1 to 35 (MYPTRPHYWRRRLSINRPQAFLLLILCLFFIHHCD) form the signal peptide.

Expressed in mainly in buds. Lower levels in roots. Detected at the base of pedicel, in the floral and funicule abscission zones, in vascular tissues, in guard cells of young seedlings and in hydathodes.

The protein resides in the secreted. It is found in the extracellular space. Functionally, may be involved in floral abscission. The protein is Protein IDA-LIKE 4 (IDL4) of Arabidopsis thaliana (Mouse-ear cress).